Reading from the N-terminus, the 277-residue chain is Orotidine 5'-phosphate decarboxylase (277 aa).

Substrate contacts are provided by residues Asp40, 62-64 (KTH), 93-102 (DRKFIDIGNT), Tyr229, and Arg247. Lys95 functions as the Proton donor in the catalytic mechanism.

This sequence belongs to the OMP decarboxylase family.

It catalyses the reaction orotidine 5'-phosphate + H(+) = UMP + CO2. It functions in the pathway pyrimidine metabolism; UMP biosynthesis via de novo pathway; UMP from orotate: step 2/2. The protein is Orotidine 5'-phosphate decarboxylase (pyrG) of Aspergillus kawachii (White koji mold).